The sequence spans 295 residues: Protoheme IX farnesyltransferase (295 aa).

Transmembrane regions (helical) follow at residues 8–28 (VTKP…FLLA), 35–55 (YPLF…GCVF), 74–94 (VLVK…LLGI), 106–125 (PLAM…VYSL), 132–152 (VYGT…GYCA), 162–182 (LILL…IAIF), 208–228 (ITLY…GGYA), 233–253 (LVVA…GYKA), and 264–284 (FVFS…DFMV).

The protein belongs to the UbiA prenyltransferase family. Protoheme IX farnesyltransferase subfamily.

Its subcellular location is the cell inner membrane. It catalyses the reaction heme b + (2E,6E)-farnesyl diphosphate + H2O = Fe(II)-heme o + diphosphate. The protein operates within porphyrin-containing compound metabolism; heme O biosynthesis; heme O from protoheme: step 1/1. In terms of biological role, converts heme B (protoheme IX) to heme O by substitution of the vinyl group on carbon 2 of heme B porphyrin ring with a hydroxyethyl farnesyl side group. The chain is Protoheme IX farnesyltransferase from Cronobacter sakazakii (strain ATCC BAA-894) (Enterobacter sakazakii).